We begin with the raw amino-acid sequence, 93 residues long: Large ribosomal subunit protein uL23cy (93 aa).

The protein belongs to the universal ribosomal protein uL23 family. In terms of assembly, part of the 50S ribosomal subunit.

It localises to the plastid. The protein resides in the chloroplast. Binds to 23S rRNA. The chain is Large ribosomal subunit protein uL23cy (rpl23-B) from Agrostis stolonifera (Creeping bentgrass).